A 212-amino-acid polypeptide reads, in one-letter code: Ribosomal RNA small subunit methyltransferase G (212 aa).

Residues glycine 75, leucine 80, 126 to 127 (AQ), and arginine 141 contribute to the S-adenosyl-L-methionine site.

This sequence belongs to the methyltransferase superfamily. RNA methyltransferase RsmG family.

It is found in the cytoplasm. In terms of biological role, specifically methylates the N7 position of guanine in position 518 of 16S rRNA. This Beutenbergia cavernae (strain ATCC BAA-8 / DSM 12333 / CCUG 43141 / JCM 11478 / NBRC 16432 / NCIMB 13614 / HKI 0122) protein is Ribosomal RNA small subunit methyltransferase G.